A 341-amino-acid polypeptide reads, in one-letter code: GTPase Obg (341 aa).

The region spanning methionine 1–leucine 159 is the Obg domain. Residues threonine 128 to arginine 150 form a disordered region. Residues arginine 129 to glycine 144 show a composition bias toward polar residues. In terms of domain architecture, OBG-type G spans alanine 160–aspartate 334. Residues glycine 166–serine 173, phenylalanine 191–histidine 195, aspartate 213–glycine 216, asparagine 283–aspartate 286, and serine 315–isoleucine 317 contribute to the GTP site. Residues serine 173 and threonine 193 each coordinate Mg(2+).

Belongs to the TRAFAC class OBG-HflX-like GTPase superfamily. OBG GTPase family. In terms of assembly, monomer. Requires Mg(2+) as cofactor.

It localises to the cytoplasm. In terms of biological role, an essential GTPase which binds GTP, GDP and possibly (p)ppGpp with moderate affinity, with high nucleotide exchange rates and a fairly low GTP hydrolysis rate. Plays a role in control of the cell cycle, stress response, ribosome biogenesis and in those bacteria that undergo differentiation, in morphogenesis control. This is GTPase Obg from Legionella pneumophila (strain Paris).